The following is a 508-amino-acid chain: Glycerol kinase (508 aa).

T17 is an ADP binding site. T17, T18, and S19 together coordinate ATP. T17 contacts sn-glycerol 3-phosphate. An ADP-binding site is contributed by R21. Residues R87, E88, Y139, and D256 each contribute to the sn-glycerol 3-phosphate site. Residues R87, E88, Y139, D256, and Q257 each contribute to the glycerol site. The ADP site is built by T278 and G322. The ATP site is built by T278, G322, Q326, and A423. Positions 423 and 427 each coordinate ADP.

It belongs to the FGGY kinase family.

The enzyme catalyses glycerol + ATP = sn-glycerol 3-phosphate + ADP + H(+). It participates in polyol metabolism; glycerol degradation via glycerol kinase pathway; sn-glycerol 3-phosphate from glycerol: step 1/1. With respect to regulation, inhibited by fructose 1,6-bisphosphate (FBP). Functionally, key enzyme in the regulation of glycerol uptake and metabolism. Catalyzes the phosphorylation of glycerol to yield sn-glycerol 3-phosphate. The protein is Glycerol kinase of Corynebacterium efficiens (strain DSM 44549 / YS-314 / AJ 12310 / JCM 11189 / NBRC 100395).